The sequence spans 683 residues: Amino acid transporter heavy chain SLC3A1 (683 aa).

Residues 1–10 (MNEDKDKRDS) are compositionally biased toward basic and acidic residues. The segment at 1–50 (MNEDKDKRDSIQMSMKGCRTNNGFVQNEDIQEQDPDSRDTPQSNAVSIPA) is disordered. At 1 to 86 (MNEDKDKRDS…ARYRVPREIL (86 aa)) the chain is on the cytoplasmic side. At Ser10 the chain carries Phosphoserine. A helical; Signal-anchor for type II membrane protein transmembrane segment spans residues 87 to 107 (FWLTVVSVFLLIGATIAIIII). The Extracellular segment spans residues 108–683 (SPKCLDWWQA…SVLDLLYSSC (576 aa)). Residue Asn211 participates in Ca(2+) binding. N-linked (GlcNAc...) asparagine glycosylation is found at Asn211, Asn238, and Asn258. Cys239 and Cys270 are joined by a disulfide. Ca(2+) contacts are provided by Asp281, Phe315, Leu316, and Glu318. Asn329 carries an N-linked (GlcNAc...) asparagine glycan. Ser383 carries the post-translational modification Phosphoserine. N-linked (GlcNAc...) asparagine glycans are attached at residues Asn510, Asn520, and Asn574. Disulfide bonds link Cys568-Cys664 and Cys671-Cys683.

As to quaternary structure, disulfide-linked heterodimer composed of the catalytic light subunit SLC7A9 and the heavy subunit SLC3A1. The heterodimer is the minimal functional unit. Assembles in non-covalently linked heterotetramers (dimers of heterodimers) and higher order oligomers; the oligomerization is mediated by SLC3A1 likely to prevent degradation in the endoplasmic reticulum and facilitate heteromer trafficking to the plasma membrane. Disulfide-linked heterodimer composed of the catalytic light subunit SLC7A13 and the heavy subunit SLC3A1. Predominantly expressed in kidney and intestine. In kidney localized to the apical membrane of the proximal tubules.

It localises to the cell membrane. Its subcellular location is the apical cell membrane. Functionally, acts as a chaperone that facilitates biogenesis and trafficking of functional transporter heteromers to the plasma membrane. Associates with SLC7A9 to form a functional transporter complex that mediates the electrogenic exchange between cationic amino acids and neutral amino acids, with a stoichiometry of 1:1. SLC7A9-SLC3A1 transporter has system b(0,+)-like activity with high affinity for extracellular cationic amino acids and L-cystine and lower affinity for intracellular neutral amino acids. Substrate exchange is driven by high concentration of intracellular neutral amino acids and the intracellular reduction of L-cystine to L-cysteine. SLC7A9-SLC3A1 acts as a major transporter for reabsorption of L-cystine and dibasic amino acids across the brush border membrane in early proximal tubules. Associates with SLC7A13 to form a functional complex that transports anionic and neutral amino acids via exchange or facilitated diffusion. SLC7A13-SLC3A1 may act as a major transporter for L-cystine in late proximal tubules, ensuring its reabsorption from the luminal fluid in exchange for cytosolic L-glutamate or L-aspartate. This Rattus norvegicus (Rat) protein is Amino acid transporter heavy chain SLC3A1 (Slc3a1).